A 517-amino-acid polypeptide reads, in one-letter code: Serine O-succinyltransferase (517 aa).

The transit peptide at 1-46 (MSPLNGVARSFPRPFQAVTRRPFRVVQPAIACPSNSRSFNHSRSLR) directs the protein to the mitochondrion. The segment covering 36–64 (SRSFNHSRSLRSTGSQSPAPSPRDSSNPA) has biased composition (polar residues). The interval 36-66 (SRSFNHSRSLRSTGSQSPAPSPRDSSNPALS) is disordered. One can recognise an AB hydrolase-1 domain in the interval 134-386 (NVILLHTGLS…LTQQLATKKQ (253 aa)). The segment at 141–144 (GLSA) is important for substrate specificity. Catalysis depends on Ser238, which acts as the Nucleophile. Arg307 lines the substrate pocket. The disordered stretch occupies residues 413-436 (QPYQEQPSASTSAEQSASASETGS). The segment covering 416–436 (QEQPSASTSAEQSASASETGS) has biased composition (low complexity). Residues Asp461 and His498 contribute to the active site. Residue Asp499 coordinates substrate.

Belongs to the AB hydrolase superfamily. MetX family.

It localises to the mitochondrion. It catalyses the reaction succinyl-CoA + L-serine = O-succinyl-L-serine + CoA. Its pathway is amino-acid biosynthesis; L-cysteine biosynthesis; L-cysteine from L-serine: step 1/2. Functionally, transfers a succinyl group from succinyl-CoA to L-serine, forming succinyl-L-serine. Also has weak serine acetyl transferase activity and homoserine succinyl transferase activity. In Emericella nidulans (strain FGSC A4 / ATCC 38163 / CBS 112.46 / NRRL 194 / M139) (Aspergillus nidulans), this protein is Serine O-succinyltransferase.